The sequence spans 248 residues: Protein PIMREG (248 aa).

Residues 1–10 (MASRWQNMGT) show a composition bias toward polar residues. A disordered region spans residues 1 to 32 (MASRWQNMGTSVRRRSLQHQEQLEDSKELQPV). Residues serine 11 and serine 16 each carry the phosphoserine modification. 2 short sequence motifs (D-box) span residues 14–17 (RRSL) and 53–56 (RLPL). The segment at 117-205 (KARRRKRGAQ…PSESDSDLEP (89 aa)) is disordered. Residue serine 129 is modified to Phosphoserine. Serine 131 carries the phosphoserine; by UHMK1; in vitro modification. 2 stretches are compositionally biased toward polar residues: residues 132 to 143 (PTHSLSQKSTRL) and 186 to 198 (PYSSTEPLCSPSE). 2 positions are modified to phosphoserine: serine 199 and serine 201.

Isoform 1 and isoform 2 interact with PICALM; this interaction may target PICALM to the nucleus. During mitosis, associates with HDAC2 and MTA2 subunits of the chromatin-remodeling NuRD complex; this association is strongest at prometaphase and decreases as the cell progresses through metaphase and anaphase. Ubiquitinated by the anaphase-promoting complex/cyclosome (APC/C) complex in the presence of FZR1, leading to its degradation by the proteasome during mitotic exit. However, degradation is not essential for normal mitotic progression within a single cell cycle. Expressed in thymus (at protein level). Detected in spleen, colon, ovary and small intestines.

It localises to the nucleus. It is found in the nucleolus. In terms of biological role, during mitosis, may play a role in the control of metaphase-to-anaphase transition. The sequence is that of Protein PIMREG from Homo sapiens (Human).